The sequence spans 286 residues: Pantothenate synthetase (286 aa).

Residue 30–37 (MGALHEGH) coordinates ATP. Residue histidine 37 is the Proton donor of the active site. Residue glutamine 61 participates in (R)-pantoate binding. Position 61 (glutamine 61) interacts with beta-alanine. An ATP-binding site is contributed by 147-150 (GEKD). Glutamine 153 is a (R)-pantoate binding site. Residues leucine 176 and 184 to 187 (HSSR) each bind ATP.

The protein belongs to the pantothenate synthetase family. Homodimer.

It localises to the cytoplasm. The catalysed reaction is (R)-pantoate + beta-alanine + ATP = (R)-pantothenate + AMP + diphosphate + H(+). Its pathway is cofactor biosynthesis; (R)-pantothenate biosynthesis; (R)-pantothenate from (R)-pantoate and beta-alanine: step 1/1. Catalyzes the condensation of pantoate with beta-alanine in an ATP-dependent reaction via a pantoyl-adenylate intermediate. The protein is Pantothenate synthetase of Bartonella tribocorum (strain CIP 105476 / IBS 506).